The sequence spans 185 residues: Ribosome-recycling factor (185 aa).

This sequence belongs to the RRF family.

It localises to the cytoplasm. Responsible for the release of ribosomes from messenger RNA at the termination of protein biosynthesis. May increase the efficiency of translation by recycling ribosomes from one round of translation to another. In Nocardioides sp. (strain ATCC BAA-499 / JS614), this protein is Ribosome-recycling factor.